Consider the following 248-residue polypeptide: Probable transcriptional regulatory protein Avi_3631 (248 aa).

This sequence belongs to the TACO1 family.

Its subcellular location is the cytoplasm. This Allorhizobium ampelinum (strain ATCC BAA-846 / DSM 112012 / S4) (Agrobacterium vitis (strain S4)) protein is Probable transcriptional regulatory protein Avi_3631.